The chain runs to 886 residues: Coatomer subunit gamma (886 aa).

5 HEAT repeats span residues 66–103 (VEAT…SSDE), 288–325 (RELT…THPM), 327–359 (VTNC…TGNE), 360–397 (SSVE…KFPL), and 472–509 (SDPS…MVES). Positions 592 to 613 (SQPLAEKKAQGKKPTGLGAPPA) are disordered.

The protein belongs to the COPG family. As to quaternary structure, oligomeric complex that consists of at least the alpha, beta, beta', gamma, delta, epsilon and zeta subunits.

Its subcellular location is the cytoplasm. It is found in the golgi apparatus membrane. The protein localises to the cytoplasmic vesicle. It localises to the COPI-coated vesicle membrane. In terms of biological role, the coatomer is a cytosolic protein complex that binds to dilysine motifs and reversibly associates with Golgi non-clathrin-coated vesicles, which further mediate biosynthetic protein transport from the ER, via the Golgi up to the trans Golgi network. Coatomer complex is required for budding from Golgi membranes, and is essential for the retrograde Golgi-to-ER transport of dilysine-tagged proteins. This chain is Coatomer subunit gamma, found in Arabidopsis thaliana (Mouse-ear cress).